The sequence spans 202 residues: Crossover junction endodeoxyribonuclease RuvC (202 aa).

Catalysis depends on residues D7, E68, and D141. Positions 7, 68, and 141 each coordinate Mg(2+).

This sequence belongs to the RuvC family. Homodimer which binds Holliday junction (HJ) DNA. The HJ becomes 2-fold symmetrical on binding to RuvC with unstacked arms; it has a different conformation from HJ DNA in complex with RuvA. In the full resolvosome a probable DNA-RuvA(4)-RuvB(12)-RuvC(2) complex forms which resolves the HJ. It depends on Mg(2+) as a cofactor.

Its subcellular location is the cytoplasm. The catalysed reaction is Endonucleolytic cleavage at a junction such as a reciprocal single-stranded crossover between two homologous DNA duplexes (Holliday junction).. The RuvA-RuvB-RuvC complex processes Holliday junction (HJ) DNA during genetic recombination and DNA repair. Endonuclease that resolves HJ intermediates. Cleaves cruciform DNA by making single-stranded nicks across the HJ at symmetrical positions within the homologous arms, yielding a 5'-phosphate and a 3'-hydroxyl group; requires a central core of homology in the junction. The consensus cleavage sequence is 5'-(A/T)TT(C/G)-3'. Cleavage occurs on the 3'-side of the TT dinucleotide at the point of strand exchange. HJ branch migration catalyzed by RuvA-RuvB allows RuvC to scan DNA until it finds its consensus sequence, where it cleaves and resolves the cruciform DNA. The chain is Crossover junction endodeoxyribonuclease RuvC from Clavibacter michiganensis subsp. michiganensis (strain NCPPB 382).